The primary structure comprises 601 residues: Glutathione-regulated potassium-efflux system protein KefB (601 aa).

Transmembrane regions (helical) follow at residues 4–24 (ADLL…VPLA), 29–49 (IGAV…GLGF), 55–75 (EILH…GLEL), 87–107 (IFGV…GLLM), 111–131 (FLWQ…TAMA), 152–172 (VLLF…LLAG), 177–197 (HFDW…LIGG), 207–227 (FIAA…LVLS), 230–250 (LFMD…GVLL), 262–282 (AIDP…GMSL), 284–304 (LGVL…LVVI), 324–344 (MQFA…FSTA), and 356–376 (ALLL…MKGI). The RCK N-terminal domain maps to 400–519 (KPQVIVVGFG…AGVTQFSRET (120 aa)).

Belongs to the monovalent cation:proton antiporter 2 (CPA2) transporter (TC 2.A.37) family. KefB subfamily. In terms of assembly, interacts with the regulatory subunit KefG.

The protein localises to the cell inner membrane. Its function is as follows. Pore-forming subunit of a potassium efflux system that confers protection against electrophiles. Catalyzes K(+)/H(+) antiport. The polypeptide is Glutathione-regulated potassium-efflux system protein KefB (Salmonella dublin (strain CT_02021853)).